Consider the following 418-residue polypeptide: Adenosylhomocysteinase (418 aa).

Substrate-binding residues include Thr53, Asp125, and Glu150. 151–153 (TTT) is a binding site for NAD(+). The substrate site is built by Lys180 and Asp184. Residues Asn185, 214–219 (GYGWCG), Glu237, Asn272, 293–295 (SGH), and Asn340 each bind NAD(+).

It belongs to the adenosylhomocysteinase family. It depends on NAD(+) as a cofactor.

The protein resides in the cytoplasm. The enzyme catalyses S-adenosyl-L-homocysteine + H2O = L-homocysteine + adenosine. The protein operates within amino-acid biosynthesis; L-homocysteine biosynthesis; L-homocysteine from S-adenosyl-L-homocysteine: step 1/1. May play a key role in the regulation of the intracellular concentration of adenosylhomocysteine. In Aquifex aeolicus (strain VF5), this protein is Adenosylhomocysteinase.